A 472-amino-acid chain; its full sequence is FAD-dependent monooxygenase ltmM (472 aa).

A helical membrane pass occupies residues Val-7–Gly-27. Positions 34, 48, and 107 each coordinate FAD. Residue Asn-186 is glycosylated (N-linked (GlcNAc...) asparagine). FAD contacts are provided by Asp-306 and Ala-319. Residues Ile-450–Leu-470 traverse the membrane as a helical segment.

The protein belongs to the paxM FAD-dependent monooxygenase family. FAD is required as a cofactor.

Its subcellular location is the membrane. It functions in the pathway secondary metabolite biosynthesis. FAD-dependent monooxygenase; part of the gene cluster that mediates the biosynthesis of lolitrems, indole-diterpene mycotoxins that are potent tremorgens in mammals, and are synthesized by clavicipitaceous fungal endophytes in association with their grass hosts. The geranylgeranyl diphosphate (GGPP) synthase ltmG is proposed to catalyze the first step in lolitrem biosynthesis. LtmG catalyzes a series of iterative condensations of isopentenyl diphosphate (IPP) with dimethylallyl diphosphate (DMAPP), geranyl diphosphate (GPP), and farnesyl diphosphate (FPP), to form GGPP. GGPP then condenses with indole-3-glycerol phosphate to form 3-geranylgeranylindole, an acyclic intermediate, to be incorporated into paxilline. Either ltmG or ltmC could be responsible for this step, as both are putative prenyl transferases. The FAD-dependent monooxygenase ltmM then catalyzes the epoxidation of the two terminal alkenes of the geranylgeranyl moiety, which is subsequently cyclized by ltmC, to paspaline. The cytochrome P450 monooxygenases ltmQ and ltmP can sequentially oxidize paspaline to terpendole E and terpendole F. Alternatively, ltmP converts paspaline to an intermediate which is oxidized by ltmQ to terpendole F. LtmF, ltmK, ltmE and ltmJ appear to be unique to the epichloe endophytes. The prenyltransferase ltmF is involved in the 27-hydroxyl-O-prenylation. The cytochrome P450 monooxygenase ltmK is required for the oxidative acetal ring formation. The multi-functional prenyltransferase ltmE is required for C20- and C21-prenylations of the indole ring of paspalanes and acts together with the cytochrome P450 monooxygenase ltmJ to yield lolitremanes by multiple oxidations and ring closures. The stereoisomer pairs of lolitriol and lolitrem N or lolitrem B and lolitrem F may be attributed to variations in the way in which ring closure can occur under the action of ltmJ. While the major product of this pathway is lolitrem B, the prenyl transferases and cytochrome P450 monooxygenases identified in this pathway have a remarkable versatility in their regio- and stereo-specificities to generate a diverse range of metabolites that are products of a metabolic grid rather than a linear pathway. The protein is FAD-dependent monooxygenase ltmM (ltmM) of Epichloe festucae (strain Fl1).